A 359-amino-acid chain; its full sequence is N-acetylhexosamine 1-kinase (359 aa).

Residues 21-359 enclose the Protein kinase domain; sequence VTGIEPYGDG…IVADIMEAAR (339 aa).

The protein belongs to the protein kinase superfamily. The cofactor is Mg(2+).

It catalyses the reaction N-acetyl-D-hexosamine + ATP = N-acetyl-alpha-D-hexosamine 1-phosphate + ADP + H(+). In terms of biological role, phosphorylates both N-acetylglucosamine (GlcNAc) and N-acetylgalactosamine (GalNAc) at similar rates. Involved in the lacto-N-biose I/galacto-N-biose (LNB/GNB) degradation pathway, which is important for host intestinal colonization by bifidobacteria. Also accepts GTP and ITP as phosphate donors. In vitro, can phosphorylate several GlcNAc and GalNAc derivatives. The chain is N-acetylhexosamine 1-kinase (nahK) from Bifidobacterium longum subsp. longum (strain ATCC 15707 / DSM 20219 / JCM 1217 / NCTC 11818 / E194b).